The chain runs to 187 residues: Elongation factor P (187 aa).

The protein belongs to the elongation factor P family.

The protein resides in the cytoplasm. It participates in protein biosynthesis; polypeptide chain elongation. In terms of biological role, involved in peptide bond synthesis. Stimulates efficient translation and peptide-bond synthesis on native or reconstituted 70S ribosomes in vitro. Probably functions indirectly by altering the affinity of the ribosome for aminoacyl-tRNA, thus increasing their reactivity as acceptors for peptidyl transferase. In Fusobacterium nucleatum subsp. nucleatum (strain ATCC 25586 / DSM 15643 / BCRC 10681 / CIP 101130 / JCM 8532 / KCTC 2640 / LMG 13131 / VPI 4355), this protein is Elongation factor P.